The sequence spans 292 residues: Elongation factor Ts (292 aa).

Residues 79–82 are involved in Mg(2+) ion dislocation from EF-Tu; that stretch reads TDFV.

This sequence belongs to the EF-Ts family.

The protein localises to the cytoplasm. Its function is as follows. Associates with the EF-Tu.GDP complex and induces the exchange of GDP to GTP. It remains bound to the aminoacyl-tRNA.EF-Tu.GTP complex up to the GTP hydrolysis stage on the ribosome. This is Elongation factor Ts from Xylella fastidiosa (strain Temecula1 / ATCC 700964).